The following is a 45-amino-acid chain: Large ribosomal subunit protein bL34 (45 aa).

It belongs to the bacterial ribosomal protein bL34 family.

The chain is Large ribosomal subunit protein bL34 from Beutenbergia cavernae (strain ATCC BAA-8 / DSM 12333 / CCUG 43141 / JCM 11478 / NBRC 16432 / NCIMB 13614 / HKI 0122).